Here is a 301-residue protein sequence, read N- to C-terminus: MDIRNEILKLKKEKGAIILAHYYQIPEIQEIADYVGDSYYLSKIAKDCEENIIVFCGVKFMAESAKILSPEKTVILPVMEAGCVMADMATADGLAKLKEEHPNAKVVCYINSSTEVKALSDVCCTSSNAENIINNLEEKEIIFLPDRNLGSYIQEKTPDKKFILWNGFCIVHEAIQKEEILRLKSEHEGILTVAHPECSKEIRDISDFIGSTSEIINFVNNSSNKKFIIITEEGVLHQLRKNGEEKEFYIPYGKMVCRNMKMTTLKDLYESLLKMENKIEIDEDLRLKAYNSLKNMHKLGG.

Iminosuccinate is bound by residues His-21 and Ser-38. A [4Fe-4S] cluster-binding site is contributed by Cys-83. Iminosuccinate-binding positions include 109 to 111 (YIN) and Ser-126. Residue Cys-169 coordinates [4Fe-4S] cluster. Iminosuccinate contacts are provided by residues 195–197 (HPE) and Thr-212. Residue Cys-257 participates in [4Fe-4S] cluster binding.

Belongs to the quinolinate synthase family. Type 2 subfamily. [4Fe-4S] cluster serves as cofactor.

The protein localises to the cytoplasm. The catalysed reaction is iminosuccinate + dihydroxyacetone phosphate = quinolinate + phosphate + 2 H2O + H(+). Its pathway is cofactor biosynthesis; NAD(+) biosynthesis; quinolinate from iminoaspartate: step 1/1. Its function is as follows. Catalyzes the condensation of iminoaspartate with dihydroxyacetone phosphate to form quinolinate. This chain is Quinolinate synthase, found in Clostridium perfringens (strain ATCC 13124 / DSM 756 / JCM 1290 / NCIMB 6125 / NCTC 8237 / Type A).